Consider the following 285-residue polypeptide: N(G),N(G)-dimethylarginine dimethylaminohydrolase 1 (285 aa).

Ala-2 carries the post-translational modification N-acetylalanine. Substrate-binding positions include Leu-30, Asp-73, 78–79 (ED), Arg-98, and Arg-145. His-173 functions as the Proton donor in the catalytic mechanism. Cys-222 bears the S-nitrosocysteine mark. A substrate-binding site is contributed by Val-268. Residue Cys-274 is modified to S-nitrosocysteine. Cys-274 acts as the Nucleophile in catalysis. Cys-274 is a binding site for Zn(2+).

Belongs to the DDAH family. Monomer. As to expression, detected in brain, liver, kidney and pancreas, and at low levels in skeletal muscle.

The catalysed reaction is N(omega),N(omega)-dimethyl-L-arginine + H2O = dimethylamine + L-citrulline. It catalyses the reaction N(omega)-methyl-L-arginine + H2O = L-citrulline + methylamine. Its activity is regulated as follows. Inhibited by zinc ions. Enzyme purified in the absence of 1,10-phenanthroline contains on average 0.4 zinc atoms per subunit. Inhibited by 4-hydroxy-nonenal through the formation of a covalent adduct with His-173. Competitively inhibited by N(5)-iminopropyl-ornithine. In terms of biological role, hydrolyzes N(G),N(G)-dimethyl-L-arginine (ADMA) and N(G)-monomethyl-L-arginine (MMA) which act as inhibitors of NOS. Has therefore a role in the regulation of nitric oxide generation. This Homo sapiens (Human) protein is N(G),N(G)-dimethylarginine dimethylaminohydrolase 1.